Here is a 212-residue protein sequence, read N- to C-terminus: MDALTRERTLIGSDDTTGLDLEPVQRPSKDEAMAAVRTLLAWAGDNPEREGLIDTPKRVVEAFDEWFAGYHGDPAKELSRTFEDVQGYDDMVMLRGIDVQSHCEHHMAPFLGKAWIAYMPTGKVVGLSKLARLVEIFAKRLQTQETMTMQIADAIEDHLSAAGVAVLIDAEHQCMSTRGVHHHDVSTITTQFRGVFKTDKVLQQRFMDLVKK.

3 residues coordinate Zn(2+): Cys103, His106, and Cys174.

The protein belongs to the GTP cyclohydrolase I family. In terms of assembly, toroid-shaped homodecamer, composed of two pentamers of five dimers.

The catalysed reaction is GTP + H2O = 7,8-dihydroneopterin 3'-triphosphate + formate + H(+). It participates in cofactor biosynthesis; 7,8-dihydroneopterin triphosphate biosynthesis; 7,8-dihydroneopterin triphosphate from GTP: step 1/1. The polypeptide is GTP cyclohydrolase 1 (Caulobacter vibrioides (strain ATCC 19089 / CIP 103742 / CB 15) (Caulobacter crescentus)).